Reading from the N-terminus, the 322-residue chain is UDP-N-acetylenolpyruvoylglucosamine reductase (322 aa).

In terms of domain architecture, FAD-binding PCMH-type spans arginine 36–glycine 202. Residue arginine 182 is part of the active site. Residue serine 231 is the Proton donor of the active site. The active site involves glutamate 301.

It belongs to the MurB family. It depends on FAD as a cofactor.

The protein localises to the cytoplasm. The enzyme catalyses UDP-N-acetyl-alpha-D-muramate + NADP(+) = UDP-N-acetyl-3-O-(1-carboxyvinyl)-alpha-D-glucosamine + NADPH + H(+). It functions in the pathway cell wall biogenesis; peptidoglycan biosynthesis. In terms of biological role, cell wall formation. This Brucella abortus (strain S19) protein is UDP-N-acetylenolpyruvoylglucosamine reductase.